Here is a 197-residue protein sequence, read N- to C-terminus: uncharacterized protein (197 aa).

4 consecutive transmembrane segments (helical) span residues 12–41 (LCIF…WVLF), 78–100 (LIQG…TALS), 120–142 (VGVF…FGCV), and 162–184 (IRFA…IFRS).

The protein resides in the cell membrane. This is an uncharacterized protein from Treponema pallidum (strain Nichols).